We begin with the raw amino-acid sequence, 1223 residues long: Glycerophosphocholine phosphodiesterase GDE1 (1223 aa).

The region spanning 1–213 (MKFGKTFANH…GTNQQMSTMK (213 aa)) is the SPX domain. Positions 43–59 (HNKNSYDEGRPPTKMRD) are enriched in basic and acidic residues. A disordered region spans residues 43–64 (HNKNSYDEGRPPTKMRDSSNSA). 6 ANK repeats span residues 427–456 (YKRT…EWNI), 472–502 (ESLT…NVKL), 504–533 (SSSL…DINY), 538–567 (LHET…DLEI), 572–601 (FGWT…NFDI), and 605–634 (GGWT…LVTH). S653 carries the post-translational modification Phosphoserine. The 346-residue stretch at 872–1217 (TRVIGHRGLG…DSVLAIRRGL (346 aa)) folds into the GP-PDE domain. A divalent metal cation-binding residues include E911, D913, and H926. S983 bears the Phosphoserine mark.

This sequence belongs to the GDE1 family. A divalent metal cation serves as cofactor.

The protein localises to the cytoplasm. The catalysed reaction is sn-glycerol 3-phosphocholine + H2O = sn-glycerol 3-phosphate + choline + H(+). The enzyme catalyses sn-glycero-3-phospho-1D-myo-inositol + H2O = myo-inositol + sn-glycerol 3-phosphate + H(+). Its function is as follows. Glycerophosphocholine glycerophosphodiesterase responsible for the hydrolysis of intracellular glycerophosphocholine into glycerol-phosphate and choline. The choline is used for phosphatidyl-choline synthesis. Required for utilization of glycerophosphocholine as phosphate source. May also use glycerophosphoinositol as substrate in vivo. The polypeptide is Glycerophosphocholine phosphodiesterase GDE1 (Saccharomyces cerevisiae (strain ATCC 204508 / S288c) (Baker's yeast)).